Consider the following 125-residue polypeptide: MVSLREQWNEQARERQREISARKTETVALLQEANQERVRVAQQQKALAIELKNQLAQFHEQLETSVGNWRQETQEQLINLEETRTANAQQQREALFNFRRQLTADVWGETESDSLKVEENTPFVA.

This sequence belongs to the gas vesicle GvpC family.

The protein resides in the gas vesicle. Functionally, gas vesicles (GV) are hollow, gas filled proteinaceous nanostructures. During planktonic growth they allow positioning of the organism at a favorable depth for light or nutrient acquisition. The polypeptide is 17 kDa gas vesicle protein (Dactylococcopsis salina (strain PCC 8305) (Myxobactron salinum)).